Consider the following 211-residue polypeptide: uncharacterized protein (211 aa).

2 stretches are compositionally biased toward low complexity: residues 1 to 19 and 61 to 74; these read MQDP…SSSD and SPSV…SSNA. 2 disordered regions span residues 1 to 27 and 54 to 94; these read MQDP…STGS and ASSR…EPHR.

Interacts with RLK902. Expressed in inflorescences, stems, rosette leaves and weakly in roots.

This is an uncharacterized protein from Arabidopsis thaliana (Mouse-ear cress).